We begin with the raw amino-acid sequence, 401 residues long: E3 ubiquitin-protein ligase RGLG4 (401 aa).

The tract at residues 1–43 (MTMGNFLKRFGSGKSRSSRNMTLGTTSSQSHEPSPSDPSLSLA) is disordered. Low complexity predominate over residues 8–19 (KRFGSGKSRSSR). Residues 20-32 (NMTLGTTSSQSHE) are compositionally biased toward polar residues. The VWFA domain occupies 79 to 299 (NLILGVDFTK…KETAFALAAL (221 aa)). The tract at residues 326–350 (VPRPPPIPYTPPTNAELPSTASPAS) is disordered. A compositionally biased stretch (pro residues) spans 327–336 (PRPPPIPYTP). The span at 341–350 (ELPSTASPAS) shows a compositional bias: polar residues. An RING-type zinc finger spans residues 357-390 (CPICLTNRKDVAFSCGHMTCGDCGSKISNCPICR).

In terms of assembly, interacts with UBC30, GRXS17 and GLB3. Widely expressed.

It localises to the cytoplasm. The protein resides in the nucleus. It carries out the reaction S-ubiquitinyl-[E2 ubiquitin-conjugating enzyme]-L-cysteine + [acceptor protein]-L-lysine = [E2 ubiquitin-conjugating enzyme]-L-cysteine + N(6)-ubiquitinyl-[acceptor protein]-L-lysine.. Functionally, possesses E3 ubiquitin-protein ligase in vitro. Acts as upstream modulator of jasmonate (JA) signaling in response to various stimuli, such as JA-inhibited root growth, JA-inductive gene expression, coronatine-mediated pathogen susceptibility, wound-stimulated expression of JA-responsive genes and wound-induced JA biosynthesis. Controls fumonisin B1 (FB1)-triggered programmed cell death (PCD) by modulating the JA signaling pathway. May mediate salicylic acid (SA) suppression of JA signaling in FB1-induced responses. May mediate the formation of 'Lys-48'-linked multiubiquitin chains. Mediates the polyubiquitination and subsequent proteasomal degradation of the target protein GRXS17. This Arabidopsis thaliana (Mouse-ear cress) protein is E3 ubiquitin-protein ligase RGLG4.